The chain runs to 229 residues: Glucose-induced degradation protein 8-B homolog (229 aa).

The LisH domain occupies 26–58 (QRADMNRLIMNYLVTEGFKEAAEKFRMESGIEP). The CTLH domain occupies 64–121 (SLDERIKIREMVLKGQIQEAIALINSLHPELLDTNRYLYFHLQQQHLIELIRLRETEA).

Identified in the CTLH complex that contains at least MAEA, RMND5A (or alternatively its paralog RMND5B), GID8, WDR26, and RANBP9 and/or RANBP10. Interacts with CTNNB1.

It is found in the cytoplasm. The protein resides in the nucleus. Its function is as follows. Core component of the CTLH E3 ubiquitin-protein ligase complex that selectively accepts ubiquitin from UBE2H and mediates ubiquitination and subsequent proteasomal degradation of target proteins. Acts as a positive regulator of Wnt signaling pathway by promoting beta-catenin (CTNNB1) nuclear accumulation. Required for normal Wnt signaling and normal dorsoventral patterning during embryogenesis. The polypeptide is Glucose-induced degradation protein 8-B homolog (gid8b) (Danio rerio (Zebrafish)).